Consider the following 351-residue polypeptide: LIM/homeobox protein ceh-14 (351 aa).

LIM zinc-binding domains lie at 46-105 and 105-169; these read AICS…KFGT and TKCS…ARDK. The homeobox DNA-binding region spans 180-239; it reads NKRPRTTISAKSLETLKQAYQTSSKPARHVREQLASETGLDMRVVQVWFQNRRAKEKRLK. Residues 238–254 show a composition bias toward basic and acidic residues; that stretch reads LKKDAGRRWKSSNRAES. Positions 238–268 are disordered; it reads LKKDAGRRWKSSNRAESDSNSPIESINGQSP. Residues 255–268 show a composition bias toward polar residues; the sequence is DSNSPIESINGQSP.

In terms of assembly, interacts (via LIM zinc-binding domains 1 and 2) with lim-7 (via LID domain). May interact with itself. May interact with homeobox protein ceh-63. As to expression, expressed in the anterior AFDL/R sensory neurons and BDUL/R and ALA interneurons, and in PVT, PVQL/R, DVC, PVNL/R, PVWL/R, PVR, PHCL/R, PHAL/R and PHBL/R cells in the tail region.

It localises to the nucleus. Its function is as follows. Probable transcription factor, modulating expression of helix-loop-helix protein mbr-1 and homeobox protein ceh-63, perhaps acting in concert with ceh-63. Binds to a motif including the sequence 5'-CTAAT-3' in regulatory promoter elements. Confers thermosensory function to neurons. Required for correct AFD-mediated thermotaxis. In concert with homeobox protein ttx-1, perhaps as components in a complex, specifies identity of AFD neurons, acting by synergistically regulating receptor-type guanylyl cyclase gcy-8, gcy-18 and other genes. Involved in postembryonic differentiation of the ALA neuron, and regulation of genes that contribute to behavioral quiescence, a sleep-like behavior mediated by ALA. Regulates its own expression and also that of homeodomain ceh-17, together forming an autoregulatory loop in the ALA neuron. Required for initial pathfinding of the ALA axons, but largely dispensable for axon migration. Involved in regulating postembryonic axon maintenance in the ventral nerve cord, acting in concert with LIM homeobox protein lim-6, via modulation of expression of immunoglobulin domain zig genes in the interneuron PVT. Plays a role in controlling the peptidergic identity of the BDU neurons, regulating expression of flp-10, nlp-1, and nlp-15, thereby modulating the harsh touch response. This Caenorhabditis elegans protein is LIM/homeobox protein ceh-14 (ceh-14).